Here is a 121-residue protein sequence, read N- to C-terminus: MSITKDQIIEAVAAMSVMDVVELISAMEEKFGVSAAAAVAVAAGPAEAAEEKTEFDVILKGIGANKVAVIKAVRGATGLGLKEAKDLVESAPAALKEGVSKDDAEALKKSLEEAGAEVEVK.

Belongs to the bacterial ribosomal protein bL12 family. As to quaternary structure, homodimer. Part of the ribosomal stalk of the 50S ribosomal subunit. Forms a multimeric L10(L12)X complex, where L10 forms an elongated spine to which 2 to 4 L12 dimers bind in a sequential fashion. Binds GTP-bound translation factors.

Its function is as follows. Forms part of the ribosomal stalk which helps the ribosome interact with GTP-bound translation factors. Is thus essential for accurate translation. The chain is Large ribosomal subunit protein bL12 from Enterobacter sp. (strain 638).